The chain runs to 128 residues: uncharacterized protein (128 aa).

This sequence belongs to the HesB/IscA family.

This is an uncharacterized protein from Buchnera aphidicola subsp. Baizongia pistaciae (strain Bp).